Consider the following 2144-residue polypeptide: Alpha-protein kinase 2 (2144 aa).

An Ig-like 1 domain is found at 7-105 (PERRTLCFLS…ICCSASLEVQ (99 aa)). A disulfide bridge links Cys-33 with Cys-98. 11 disordered regions span residues 425 to 473 (ETAK…LQTM), 500 to 575 (SLAR…GAPG), 727 to 775 (EDNE…NVGS), 845 to 864 (QTQGSEPPRSTDKRSQDGKS), 881 to 907 (EASEDAVGETAADVENPPSTFSSTLPY), 1011 to 1065 (SCEA…PEGQ), 1316 to 1340 (DPVEDKELEVTDSPSEVSKTGEMEM), 1471 to 1509 (GPGEEGQGIPSVCSMSQTQDGGDRSLGEAGQRGTDETEV), 1565 to 1587 (CGNHVRSSDDLTNTPCTSSPKGN), 1629 to 1696 (ECES…GSGH), and 1720 to 1754 (ENSRKNSIVKKTPKFERSLSRTDEKRDPKRAPCKA). Over residues 500–511 (SLARERTDEKYP) the composition is skewed to basic and acidic residues. The segment covering 853 to 864 (RSTDKRSQDGKS) has biased composition (basic and acidic residues). A compositionally biased stretch (polar residues) spans 897-906 (PPSTFSSTLP). Positions 1574 to 1587 (DLTNTPCTSSPKGN) are enriched in polar residues. 2 stretches are compositionally biased toward basic and acidic residues: residues 1631–1645 (ESEKDPKSLLRRDPC) and 1732–1754 (PKFERSLSRTDEKRDPKRAPCKA). An Ig-like 2 domain is found at 1759–1847 (PVLLKRIQAE…GKVTAEFNLT (89 aa)). Cys-1781 and Cys-1831 are disulfide-bonded. An Alpha-type protein kinase domain is found at 1874–2106 (KEDVFNDSYF…YCKMLGLKSL (233 aa)). A disordered region spans residues 2109-2144 (NSQKPKKPIVGKGRVPTNATQVKTPESETPPAERKT).

This sequence belongs to the protein kinase superfamily. Alpha-type protein kinase family. ALPK subfamily.

It is found in the basolateral cell membrane. It catalyses the reaction L-seryl-[protein] + ATP = O-phospho-L-seryl-[protein] + ADP + H(+). The enzyme catalyses L-threonyl-[protein] + ATP = O-phospho-L-threonyl-[protein] + ADP + H(+). Protein kinase that recognizes phosphorylation sites in which the surrounding peptides have an alpha-helical conformation. Regulates cardiac development and cardiomyocyte differentiation by negatively regulating Wnt/beta-catenin signaling. In Mus musculus (Mouse), this protein is Alpha-protein kinase 2.